Reading from the N-terminus, the 139-residue chain is Self-incompatibility protein S1 (139 aa).

Positions 1–19 are cleaved as a signal peptide; it reads MNIFYVIVLLSFFLSKSSG. Asn51 carries N-linked (GlcNAc...) asparagine glycosylation.

This sequence belongs to the plant self-incompatibility (S1) protein family. Glycosylated (S1b) and unglocosylated (S1a) forms coexist. Accumulates in the stigma (at protein level).

Its subcellular location is the secreted. Exhibits specific pollen self-inhibitory activity thus preventing self-fertilization. The polypeptide is Self-incompatibility protein S1 (Papaver rhoeas (Common poppy)).